The chain runs to 64 residues: Large ribosomal subunit protein uL30 (64 aa).

The interval 1–22 is disordered; it reads MSEQVKRVRVTQVGSPIGRKPG.

The protein belongs to the universal ribosomal protein uL30 family. In terms of assembly, part of the 50S ribosomal subunit.

This is Large ribosomal subunit protein uL30 from Acidiphilium cryptum (strain JF-5).